A 434-amino-acid chain; its full sequence is Ribosomal protein uS12 methylthiotransferase RimO (434 aa).

Residues 2 to 112 (AKIGFVSLGC…VLEAVQEVLP (111 aa)) form the MTTase N-terminal domain. [4Fe-4S] cluster contacts are provided by Cys-11, Cys-47, Cys-76, Cys-142, Cys-146, and Cys-149. The region spanning 128 to 365 (LTPRHYAYVK…LEVQARVSLR (238 aa)) is the Radical SAM core domain. The TRAM domain occupies 368–434 (QRFVGKTLEV…DTYDLHGVQA (67 aa)).

Belongs to the methylthiotransferase family. RimO subfamily. Requires [4Fe-4S] cluster as cofactor.

The protein resides in the cytoplasm. It carries out the reaction L-aspartate(89)-[ribosomal protein uS12]-hydrogen + (sulfur carrier)-SH + AH2 + 2 S-adenosyl-L-methionine = 3-methylsulfanyl-L-aspartate(89)-[ribosomal protein uS12]-hydrogen + (sulfur carrier)-H + 5'-deoxyadenosine + L-methionine + A + S-adenosyl-L-homocysteine + 2 H(+). Catalyzes the methylthiolation of an aspartic acid residue of ribosomal protein uS12. The polypeptide is Ribosomal protein uS12 methylthiotransferase RimO (Thermus thermophilus (strain ATCC BAA-163 / DSM 7039 / HB27)).